The chain runs to 258 residues: Alpha-fibrinogenase-like (258 aa).

The signal sequence occupies residues 1–18; that stretch reads MVLIRVLANLLVLQLSYA. A propeptide spanning residues 19-24 is cleaved from the precursor; the sequence is QKSSEL. The Peptidase S1 domain maps to 25–249; the sequence is VVGGHPCNIY…YTDWIHSIIA (225 aa). Disulfide bonds link C31/C163, C50/C66, C98/C256, C142/C210, C174/C189, and C200/C225. N44 is a glycosylation site (N-linked (GlcNAc...) asparagine). Catalysis depends on charge relay system residues H65 and D110. S204 serves as the catalytic Charge relay system.

This sequence belongs to the peptidase S1 family. Snake venom subfamily. As to quaternary structure, monomer. As to expression, expressed by the venom gland.

It localises to the secreted. Its function is as follows. Degrades alpha chain of fibrinogen (FGA), and has strong caseinolytic activity. Cleaves oxidized insulin B-chain at '40-Tyr-|-Leu-41', '48-Phe-|-Phe-49' and '49-Phe-|-Tyr-50', and glucagon at the bonds '62-Tyr-|-Ser-63', 66-Leu-|-Asp-67' and '78-Leu-|-Met-79' bonds. The polypeptide is Alpha-fibrinogenase-like (Daboia siamensis (Eastern Russel's viper)).